The chain runs to 1113 residues: Myosin-binding protein 1 (1113 aa).

A helical membrane pass occupies residues 12–34 (LAFNEWLLMFMLFVNSIFSYVIA). The tract at residues 209 to 229 (ESEAVFSDTEPKQESSLNHLP) is disordered. The GTD-binding domain occupies 888-986 (SEGDRLKRQV…DLEAEIEYFR (99 aa)).

In terms of assembly, interacts with myosin XI-K, XI-I and XI-1. As to expression, expressed in leaf epidermal cells, roots and root hairs.

The protein localises to the endomembrane system. Functionally, membrane-anchored myosin receptors that define a distinct, plant-specific transport vesicle compartment. The polypeptide is Myosin-binding protein 1 (Arabidopsis thaliana (Mouse-ear cress)).